We begin with the raw amino-acid sequence, 196 residues long: uncharacterized protein (196 aa).

A helical membrane pass occupies residues 26–46 (ITFFFILLICFICILLLLAIF).

It is found in the membrane. This is an uncharacterized protein from Mus musculus (Mouse).